A 73-amino-acid chain; its full sequence is Conotoxin CnIIIG (73 aa).

The first 19 residues, 1 to 19 (MSKLGVLLTICLLLLPLTA), serve as a signal peptide directing secretion. Residues 20-48 (LPMDEDQPADQPADRMQDDISSEQYPLFD) constitute a propeptide that is removed on maturation. The residue at position 51 (Gln-51) is a Pyrrolidone carboxylic acid. 3 disulfides stabilise this stretch: Cys-53-Cys-72, Cys-54-Cys-70, and Cys-60-Cys-73.

Belongs to the conotoxin M superfamily. In terms of tissue distribution, expressed by the venom duct.

Its subcellular location is the secreted. Its function is as follows. Shows a paralytic effect in fish. This Conus consors (Singed cone) protein is Conotoxin CnIIIG.